The sequence spans 333 residues: Phenylalanine--tRNA ligase alpha subunit (333 aa).

Glutamate 254 provides a ligand contact to Mg(2+).

This sequence belongs to the class-II aminoacyl-tRNA synthetase family. Phe-tRNA synthetase alpha subunit type 1 subfamily. In terms of assembly, tetramer of two alpha and two beta subunits. The cofactor is Mg(2+).

It is found in the cytoplasm. It catalyses the reaction tRNA(Phe) + L-phenylalanine + ATP = L-phenylalanyl-tRNA(Phe) + AMP + diphosphate + H(+). This chain is Phenylalanine--tRNA ligase alpha subunit (pheS), found in Xylella fastidiosa (strain 9a5c).